The primary structure comprises 271 residues: MKI67 FHA domain-interacting nucleolar phosphoprotein (271 aa).

Residues 1–20 (MAEYSGPAKPTLALNPREDS) are disordered. An N-acetylalanine modification is found at alanine 2. Lysine 37 participates in a covalent cross-link: Glycyl lysine isopeptide (Lys-Gly) (interchain with G-Cter in SUMO2). Residues 44–122 (GVVYLGHLPS…RLLSCKFMPR (79 aa)) enclose the RRM domain. The residue at position 113 (arginine 113) is an Omega-N-methylarginine. Glycyl lysine isopeptide (Lys-Gly) (interchain with G-Cter in SUMO2) cross-links involve residues lysine 178 and lysine 191. Residues threonine 213 and threonine 217 each carry the phosphothreonine modification. Residues arginine 223 and arginine 224 each carry the omega-N-methylated arginine modification. Serine 226 carries the phosphoserine modification. The interval 242 to 271 (PVSPVKEDTQKTPAPESSGKKRLRKRKSKQ) is disordered. A Glycyl lysine isopeptide (Lys-Gly) (interchain with G-Cter in SUMO1); alternate cross-link involves residue lysine 247. Residue lysine 247 forms a Glycyl lysine isopeptide (Lys-Gly) (interchain with G-Cter in SUMO2); alternate linkage. Residues 261–271 (KKRLRKRKSKQ) show a composition bias toward basic residues.

As to quaternary structure, binds to the FHA domain of MKI67; this interaction is enhanced in mitosis. In terms of processing, phosphorylated.

It localises to the nucleus. The protein localises to the nucleolus. It is found in the chromosome. This chain is MKI67 FHA domain-interacting nucleolar phosphoprotein (Nifk), found in Rattus norvegicus (Rat).